A 426-amino-acid chain; its full sequence is Glutamate-1-semialdehyde 2,1-aminomutase (426 aa).

Lys-263 carries the post-translational modification N6-(pyridoxal phosphate)lysine.

It belongs to the class-III pyridoxal-phosphate-dependent aminotransferase family. HemL subfamily. In terms of assembly, homodimer. The cofactor is pyridoxal 5'-phosphate.

The protein localises to the cytoplasm. The enzyme catalyses (S)-4-amino-5-oxopentanoate = 5-aminolevulinate. Its pathway is porphyrin-containing compound metabolism; protoporphyrin-IX biosynthesis; 5-aminolevulinate from L-glutamyl-tRNA(Glu): step 2/2. The protein is Glutamate-1-semialdehyde 2,1-aminomutase of Dichelobacter nodosus (strain VCS1703A).